The following is a 293-amino-acid chain: Shikimate kinase (293 aa).

Position 87-97 (87-97 (PLAGGLKSSSA)) interacts with ATP.

Belongs to the GHMP kinase family. Archaeal shikimate kinase subfamily.

It localises to the cytoplasm. It carries out the reaction shikimate + ATP = 3-phosphoshikimate + ADP + H(+). It functions in the pathway metabolic intermediate biosynthesis; chorismate biosynthesis; chorismate from D-erythrose 4-phosphate and phosphoenolpyruvate: step 5/7. The sequence is that of Shikimate kinase from Methanosarcina mazei (strain ATCC BAA-159 / DSM 3647 / Goe1 / Go1 / JCM 11833 / OCM 88) (Methanosarcina frisia).